The chain runs to 260 residues: Proteasome subunit alpha (260 aa).

Belongs to the peptidase T1A family. In terms of assembly, the 20S proteasome core is composed of 14 alpha and 14 beta subunits that assemble into four stacked heptameric rings, resulting in a barrel-shaped structure. The two inner rings, each composed of seven catalytic beta subunits, are sandwiched by two outer rings, each composed of seven alpha subunits. The catalytic chamber with the active sites is on the inside of the barrel. Has a gated structure, the ends of the cylinder being occluded by the N-termini of the alpha-subunits. Is capped at one or both ends by the proteasome regulatory ATPase, PAN.

The protein resides in the cytoplasm. Its activity is regulated as follows. The formation of the proteasomal ATPase PAN-20S proteasome complex, via the docking of the C-termini of PAN into the intersubunit pockets in the alpha-rings, triggers opening of the gate for substrate entry. Interconversion between the open-gate and close-gate conformations leads to a dynamic regulation of the 20S proteasome proteolysis activity. Functionally, component of the proteasome core, a large protease complex with broad specificity involved in protein degradation. The protein is Proteasome subunit alpha of Thermococcus sp. (strain JCM 11816 / KS-1).